The chain runs to 298 residues: 2-dehydropantoate 2-reductase (298 aa).

Residues 7–12, N98, and A124 each bind NADP(+); that span reads GGGSVG. N98 lines the substrate pocket. K179 serves as the catalytic Proton donor. Substrate is bound by residues N183, N187, N197, and S246. E258 contributes to the NADP(+) binding site.

This sequence belongs to the ketopantoate reductase family.

It localises to the cytoplasm. The catalysed reaction is (R)-pantoate + NADP(+) = 2-dehydropantoate + NADPH + H(+). The protein operates within cofactor biosynthesis; (R)-pantothenate biosynthesis; (R)-pantoate from 3-methyl-2-oxobutanoate: step 2/2. Functionally, catalyzes the NADPH-dependent reduction of ketopantoate into pantoic acid. The protein is 2-dehydropantoate 2-reductase (panE) of Bacillus subtilis (strain 168).